The primary structure comprises 329 residues: GTPase Obg (329 aa).

The Obg domain maps to 2-160; it reads YNFKDSVSIT…LNVRLELFLV (159 aa). The region spanning 161 to 327 is the OBG-type G domain; it reads ADIGLVGPPN…LIKEFFILAK (167 aa). Residues 167-174, 192-196, 213-216, 280-283, and 308-310 contribute to the GTP site; these read GPPNAGKS, FTTKI, DIPG, NKLD, and SIY. Residues Ser-174 and Thr-194 each coordinate Mg(2+).

Belongs to the TRAFAC class OBG-HflX-like GTPase superfamily. OBG GTPase family. Monomer. Mg(2+) serves as cofactor.

It is found in the cytoplasm. An essential GTPase which binds GTP, GDP and possibly (p)ppGpp with moderate affinity, with high nucleotide exchange rates and a fairly low GTP hydrolysis rate. Plays a role in control of the cell cycle, stress response, ribosome biogenesis and in those bacteria that undergo differentiation, in morphogenesis control. The chain is GTPase Obg from Borrelia garinii subsp. bavariensis (strain ATCC BAA-2496 / DSM 23469 / PBi) (Borreliella bavariensis).